The sequence spans 905 residues: Cation-transporting ATPase pma1 (905 aa).

A run of 4 helical transmembrane segments spans residues 60–80 (FLLQ…TVKA), 81–101 (FLGS…NAII), 248–268 (FSHT…AVGW), and 283–303 (ALAV…TLAI). Catalysis depends on Asp-333, which acts as the 4-aspartylphosphate intermediate. Helical transmembrane passes span 716–736 (ILIS…VLWL), 774–794 (LLHR…GMFE), 809–829 (MAIQ…SQLG), 848–868 (ILLL…QLPF), and 880–900 (WQQW…AILA).

The protein belongs to the cation transport ATPase (P-type) (TC 3.A.3) family. Type IIA subfamily.

The protein localises to the cell membrane. It catalyses the reaction ATP + H2O = ADP + phosphate + H(+). Functionally, could mediate calcium influx. The sequence is that of Cation-transporting ATPase pma1 (pma1) from Synechocystis sp. (strain ATCC 27184 / PCC 6803 / Kazusa).